We begin with the raw amino-acid sequence, 337 residues long: MNHSSKKNKNRILRNKARIYCDVNLHKPKEYWNYEALNVKWETQDDYEIIRKIGRGKYSEVFEGANIKNNEKCVIKVLKPVKKKKIKREIKILQNLCGGPNIITLYDVVRDPQSKTPSLIFEYINNTDFKHLSPTLTDFDVRYYIRELLHALDFCHSNGIMHRDVKPSNVMIDHQKRKLYLIDWGLAEFYHPNQDYNVRVASRPYKGPELLVDMEDYDYSLDMWSLGCMFAGMLFQKDPFFHGHDNIDQLVKIVKILGTEEFYAYLDKYGIVVDHTILSIIGKHPKKPWSRFITKENQHLAVPEAIDFLEKLLRYDPAERLTTREAMEHPYFKPLSH.

Positions 47–332 constitute a Protein kinase domain; the sequence is YEIIRKIGRG…TREAMEHPYF (286 aa). Residues 53–61 and Lys76 each bind ATP; that span reads IGRGKYSEV. The Proton acceptor role is filled by Asp164.

Belongs to the protein kinase superfamily. CMGC Ser/Thr protein kinase family. CK2 subfamily. As to quaternary structure, tetramer of two alpha and two beta chains.

It catalyses the reaction L-seryl-[protein] + ATP = O-phospho-L-seryl-[protein] + ADP + H(+). It carries out the reaction L-threonyl-[protein] + ATP = O-phospho-L-threonyl-[protein] + ADP + H(+). In terms of biological role, casein kinases are operationally defined by their preferential utilization of acidic proteins such as caseins as substrates. The alpha chain contains the catalytic site. The protein is Casein kinase II subunit alpha (casK) of Dictyostelium discoideum (Social amoeba).